A 253-amino-acid chain; its full sequence is Geranylgeranylglyceryl phosphate synthase (253 aa).

Mg(2+) contacts are provided by D28 and S53. Residues 172–178 (YLEAGSG), 203–204 (GG), and 225–226 (GN) each bind sn-glycerol 1-phosphate.

Belongs to the GGGP/HepGP synthase family. Group II subfamily. It depends on Mg(2+) as a cofactor.

The protein localises to the cytoplasm. It catalyses the reaction sn-glycerol 1-phosphate + (2E,6E,10E)-geranylgeranyl diphosphate = sn-3-O-(geranylgeranyl)glycerol 1-phosphate + diphosphate. It functions in the pathway membrane lipid metabolism; glycerophospholipid metabolism. Functionally, prenyltransferase that catalyzes the transfer of the geranylgeranyl moiety of geranylgeranyl diphosphate (GGPP) to the C3 hydroxyl of sn-glycerol-1-phosphate (G1P). This reaction is the first ether-bond-formation step in the biosynthesis of archaeal membrane lipids. This chain is Geranylgeranylglyceryl phosphate synthase, found in Methanocaldococcus jannaschii (strain ATCC 43067 / DSM 2661 / JAL-1 / JCM 10045 / NBRC 100440) (Methanococcus jannaschii).